The following is a 242-amino-acid chain: Cysteine-rich venom protein helothermine (242 aa).

The first 19 residues, 1 to 19 (MILLSLYLCLAAMLHQSEG), serve as a signal peptide directing secretion. Residues 41–169 (DKHNNLRRIV…TYKYYQVCQY (129 aa)) form the SCP domain. 8 cysteine pairs are disulfide-bonded: C77-C155, C94-C170, C150-C167, C189-C196, C192-C201, C205-C237, C214-C231, and C223-C235. Positions 205–237 (CKQNDVYNNCPDLKKQVGCGHPIMKDCMATCKC) constitute a ShKT domain.

The protein belongs to the CRISP family. Expressed by the venom gland.

It is found in the secreted. Its function is as follows. Alters a variety of ion channel activities, including voltage-gated potassium channels (Kv), voltage-gated calcium channels (L-, N-, and P-type) (Cav) and ryanodine receptors (RyR). Is toxic to mice (causes lethargy, partial paralysis of rear limbs and lowering of body temperature). This is Cysteine-rich venom protein helothermine from Heloderma horridum horridum (Mexican beaded lizard).